The sequence spans 257 residues: Imidazole glycerol phosphate synthase subunit HisF (257 aa).

Residues Asp11 and Asp130 contribute to the active site.

It belongs to the HisA/HisF family. Heterodimer of HisH and HisF.

The protein localises to the cytoplasm. The enzyme catalyses 5-[(5-phospho-1-deoxy-D-ribulos-1-ylimino)methylamino]-1-(5-phospho-beta-D-ribosyl)imidazole-4-carboxamide + L-glutamine = D-erythro-1-(imidazol-4-yl)glycerol 3-phosphate + 5-amino-1-(5-phospho-beta-D-ribosyl)imidazole-4-carboxamide + L-glutamate + H(+). Its pathway is amino-acid biosynthesis; L-histidine biosynthesis; L-histidine from 5-phospho-alpha-D-ribose 1-diphosphate: step 5/9. IGPS catalyzes the conversion of PRFAR and glutamine to IGP, AICAR and glutamate. The HisF subunit catalyzes the cyclization activity that produces IGP and AICAR from PRFAR using the ammonia provided by the HisH subunit. This Pseudoalteromonas atlantica (strain T6c / ATCC BAA-1087) protein is Imidazole glycerol phosphate synthase subunit HisF.